The sequence spans 294 residues: NAD kinase (294 aa).

The active-site Proton acceptor is Asp-74. Residues 74-75 (DG), 148-149 (NE), His-159, Arg-176, Asp-178, 189-194 (TAYSLS), and Gln-249 contribute to the NAD(+) site.

It belongs to the NAD kinase family. A divalent metal cation is required as a cofactor.

It localises to the cytoplasm. The enzyme catalyses NAD(+) + ATP = ADP + NADP(+) + H(+). Its function is as follows. Involved in the regulation of the intracellular balance of NAD and NADP, and is a key enzyme in the biosynthesis of NADP. Catalyzes specifically the phosphorylation on 2'-hydroxyl of the adenosine moiety of NAD to yield NADP. The chain is NAD kinase from Vibrio campbellii (strain ATCC BAA-1116).